The sequence spans 296 residues: 5,10-methylenetetrahydrofolate reductase (296 aa).

Glu28 serves as the catalytic Proton donor/acceptor. Thr59 contributes to the NADH binding site. FAD is bound by residues Tyr60, Ala62, His88, Arg118, Gly119, Asp120, Ala132, Tyr152, His156, Ala159, Asp165, Asn168, Arg171, and Lys172. Residue Asp120 participates in (6S)-5-methyl-5,6,7,8-tetrahydrofolate binding. Gln183 serves as a coordination point for NADH. (6S)-5-methyl-5,6,7,8-tetrahydrofolate is bound by residues Gln183, Gln219, and Arg279.

It belongs to the methylenetetrahydrofolate reductase family. It depends on FAD as a cofactor.

It carries out the reaction (6S)-5-methyl-5,6,7,8-tetrahydrofolate + NAD(+) = (6R)-5,10-methylene-5,6,7,8-tetrahydrofolate + NADH + H(+). It participates in one-carbon metabolism; tetrahydrofolate interconversion. It functions in the pathway amino-acid biosynthesis; L-methionine biosynthesis via de novo pathway. Functionally, catalyzes the NADH-dependent reduction of 5,10-methylenetetrahydrofolate to 5-methyltetrahydrofolate. Is required to provide the methyl group necessary for methionine synthetase to convert homocysteine to methionine; the methyl group is given by 5-methyltetrahydrofolate. The protein is 5,10-methylenetetrahydrofolate reductase (metF) of Salmonella typhimurium (strain LT2 / SGSC1412 / ATCC 700720).